A 96-amino-acid chain; its full sequence is Essential MCU regulator, mitochondrial (96 aa).

Residues 1-34 (MIVSRLTFPLQAAKLVARKAAGNPSNSIIQRRHM) constitute a mitochondrion transit peptide. Residues 52-72 (PFGLFAIFCAVIPGLFIGATI) traverse the membrane as a helical segment.

It belongs to the SMDT1/EMRE family.

Its subcellular location is the mitochondrion inner membrane. In terms of biological role, essential regulatory subunit of the mitochondrial calcium uniporter (mcu) channel, a protein that mediates calcium uptake into mitochondria. This is Essential MCU regulator, mitochondrial from Drosophila pseudoobscura pseudoobscura (Fruit fly).